The following is a 164-amino-acid chain: Urocortin-3 (164 aa).

The N-terminal stretch at 1–23 (MLMPTYFLLPLLLLLGGPRTSLS) is a signal peptide. Positions 24 to 121 (HKFYNTGPVF…PDKPKSDRGT (98 aa)) are excised as a propeptide. The interval 58–120 (SFGHLPTQDP…YPDKPKSDRG (63 aa)) is disordered. Residues 110 to 120 (LYPDKPKSDRG) show a composition bias toward basic and acidic residues. Isoleucine amide is present on Ile160.

This sequence belongs to the sauvagine/corticotropin-releasing factor/urotensin I family. As to quaternary structure, binds with high affinity to CRF receptors 2-alpha and 2-beta. In terms of tissue distribution, expressed in some areas of the brain including the hypothalamus, amygdala, and brainstem, but is not evident in the cerebellum, pituitary, or cerebral cortex; it is also expressed peripherally in small intestine and skin.

It localises to the secreted. Its function is as follows. Suppresses food intake, delays gastric emptying and decreases heat-induced edema. Might represent an endogenous ligand for maintaining homeostasis after stress. This chain is Urocortin-3 (Ucn3), found in Mus musculus (Mouse).